Consider the following 105-residue polypeptide: UPF0145 protein lpl0253 (105 aa).

The protein belongs to the UPF0145 family.

The protein is UPF0145 protein lpl0253 of Legionella pneumophila (strain Lens).